Reading from the N-terminus, the 209-residue chain is uncharacterized protein (209 aa).

4 consecutive transmembrane segments (helical) span residues 21-41 (LAYL…VFGL), 81-101 (ILGL…RIAA), 107-127 (VLVN…LYVF), and 159-179 (AAGA…LLFF).

Its subcellular location is the cell membrane. This is an uncharacterized protein from Bacillus subtilis (strain 168).